The sequence spans 707 residues: Protein kinase C theta type (707 aa).

In terms of domain architecture, C2 spans 1-107 (MSPFLRIGLS…KNNGRTEIWL (107 aa)). Y90 is modified (phosphotyrosine; by LCK). The segment at 159–209 (CHEFTATFFPQPTFCSVCHEFVWGLNKQGYQCRRCNAAIHKKCIDKVIAKC) adopts a Phorbol-ester/DAG-type 1 zinc-finger fold. A Phosphothreonine; by autocatalysis modification is found at T219. Residues 231–281 (PHRFKVYNYKSPTFCEHCGTLLWGLARQGLKCDACGMNVHHRCQTKVANLC) form a Phorbol-ester/DAG-type 2 zinc finger. Residue S348 is modified to Phosphoserine. The region spanning 380–634 (FILHKMLGKG…RGDIRQHPLF (255 aa)) is the Protein kinase domain. Residues 386–394 (LGKGSFGKV) and K409 each bind ATP. The Proton acceptor role is filled by D504. A Phosphothreonine; by PDPK1 modification is found at T538. Residues 635–706 (REINWEELER…INPGMETLIC (72 aa)) enclose the AGC-kinase C-terminal domain. Phosphoserine occurs at positions 676 and 685. S695 carries the phosphoserine; by autocatalysis modification.

The protein belongs to the protein kinase superfamily. AGC Ser/Thr protein kinase family. PKC subfamily. Part of a membrane raft complex composed at least of BCL10, CARD11, MALT1 and IKBKB. Interacts with GLRX3 (via N-terminus). Interacts with ECT2. Interacts with CCDC88A/GIV; the interaction leads to phosphorylation of CCDC88A and inhibition of its guanine nucleotide exchange factor activity. Interacts with CD28. It depends on Mg(2+) as a cofactor. Autophosphorylation at Thr-219 is required for targeting to the TCR and cellular function of PRKCQ upon antigen receptor ligation. Following TCR stimulation, phosphorylated at Tyr-90 and Ser-685.

It is found in the cytoplasm. The protein localises to the cell membrane. The enzyme catalyses L-seryl-[protein] + ATP = O-phospho-L-seryl-[protein] + ADP + H(+). It catalyses the reaction L-threonyl-[protein] + ATP = O-phospho-L-threonyl-[protein] + ADP + H(+). Its activity is regulated as follows. Novel PKCs (PRKCD, PRKCE, PRKCH and PRKCQ) are calcium-insensitive, but activated by diacylglycerol (DAG) and phosphatidylserine. Three specific sites; Thr-538 (activation loop of the kinase domain), Ser-676 (turn motif) and Ser-695 (hydrophobic region), need to be phosphorylated for its full activation. Functionally, calcium-independent, phospholipid- and diacylglycerol (DAG)-dependent serine/threonine-protein kinase that mediates non-redundant functions in T-cell receptor (TCR) signaling, including T-cells activation, proliferation, differentiation and survival, by mediating activation of multiple transcription factors such as NF-kappa-B, JUN, NFATC1 and NFATC2. In TCR-CD3/CD28-co-stimulated T-cells, is required for the activation of NF-kappa-B and JUN, which in turn are essential for IL2 production, and participates in the calcium-dependent NFATC1 and NFATC2 transactivation. Mediates the activation of the canonical NF-kappa-B pathway (NFKB1) by direct phosphorylation of CARD11 on several serine residues, inducing CARD11 association with lipid rafts and recruitment of the BCL10-MALT1 complex, which then activates IKK complex, resulting in nuclear translocation and activation of NFKB1. May also play an indirect role in activation of the non-canonical NF-kappa-B (NFKB2) pathway. In the signaling pathway leading to JUN activation, acts by phosphorylating the mediator STK39/SPAK and may not act through MAP kinases signaling. Plays a critical role in TCR/CD28-induced NFATC1 and NFATC2 transactivation by participating in the regulation of reduced inositol 1,4,5-trisphosphate generation and intracellular calcium mobilization. After costimulation of T-cells through CD28 can phosphorylate CBLB and is required for the ubiquitination and subsequent degradation of CBLB, which is a prerequisite for the activation of TCR. During T-cells differentiation, plays an important role in the development of T-helper 2 (Th2) cells following immune and inflammatory responses, and, in the development of inflammatory autoimmune diseases, is necessary for the activation of IL17-producing Th17 cells. May play a minor role in Th1 response. Upon TCR stimulation, mediates T-cell protective survival signal by phosphorylating BAD, thus protecting T-cells from BAD-induced apoptosis, and by up-regulating BCL-X(L)/BCL2L1 levels through NF-kappa-B and JUN pathways. In platelets, regulates signal transduction downstream of the ITGA2B, CD36/GP4, F2R/PAR1 and F2RL3/PAR4 receptors, playing a positive role in 'outside-in' signaling and granule secretion signal transduction. May relay signals from the activated ITGA2B receptor by regulating the uncoupling of WASP and WIPF1, thereby permitting the regulation of actin filament nucleation and branching activity of the Arp2/3 complex. May mediate inhibitory effects of free fatty acids on insulin signaling by phosphorylating IRS1, which in turn blocks IRS1 tyrosine phosphorylation and downstream activation of the PI3K/AKT pathway. Phosphorylates MSN (moesin) in the presence of phosphatidylglycerol or phosphatidylinositol. Phosphorylates PDPK1 at 'Ser-504' and 'Ser-532' and negatively regulates its ability to phosphorylate PKB/AKT1. Phosphorylates CCDC88A/GIV and inhibits its guanine nucleotide exchange factor activity. Phosphorylates and activates LRRK1, which phosphorylates RAB proteins involved in intracellular trafficking. The protein is Protein kinase C theta type (Prkcq) of Rattus norvegicus (Rat).